The sequence spans 434 residues: Innexin-14 (434 aa).

The next 4 helical transmembrane spans lie at 30–50, 106–126, 301–321, and 365–385; these read LFTV…QHFG, WVPF…WCWA, IFIG…IGTV, and YLCA…GFLK.

This sequence belongs to the pannexin family.

It is found in the cell membrane. The protein resides in the cell junction. Its subcellular location is the gap junction. Functionally, structural component of the gap junctions. This is Innexin-14 (inx-14) from Caenorhabditis elegans.